The chain runs to 304 residues: tRNA dimethylallyltransferase (304 aa).

Position 10–17 (10–17) interacts with ATP; it reads GPTASGKT. 12–17 contributes to the substrate binding site; the sequence is TASGKT. 3 interaction with substrate tRNA regions span residues 35–38, 159–163, and 240–245; these read DSAL, QRLSR, and RCVGYR.

Belongs to the IPP transferase family. Monomer. Requires Mg(2+) as cofactor.

The catalysed reaction is adenosine(37) in tRNA + dimethylallyl diphosphate = N(6)-dimethylallyladenosine(37) in tRNA + diphosphate. Its function is as follows. Catalyzes the transfer of a dimethylallyl group onto the adenine at position 37 in tRNAs that read codons beginning with uridine, leading to the formation of N6-(dimethylallyl)adenosine (i(6)A). The polypeptide is tRNA dimethylallyltransferase (Shewanella sp. (strain W3-18-1)).